The sequence spans 596 residues: Chitooligosaccharidolytic beta-N-acetylglucosaminidase (596 aa).

The first 23 residues, 1 to 23 (MWLQAICIYTVFIIIGCGIPTAA), serve as a signal peptide directing secretion. Asn166, Asn264, and Asn377 each carry an N-linked (GlcNAc...) asparagine glycan.

The protein belongs to the glycosyl hydrolase 20 family.

The enzyme catalyses Hydrolysis of terminal non-reducing N-acetyl-D-hexosamine residues in N-acetyl-beta-D-hexosaminides.. Its function is as follows. Active during metamorphosis to degrade chitin. This Bombyx mori (Silk moth) protein is Chitooligosaccharidolytic beta-N-acetylglucosaminidase.